A 96-amino-acid chain; its full sequence is Co-chaperonin GroES (96 aa).

Belongs to the GroES chaperonin family. Heptamer of 7 subunits arranged in a ring. Interacts with the chaperonin GroEL.

It is found in the cytoplasm. Its function is as follows. Together with the chaperonin GroEL, plays an essential role in assisting protein folding. The GroEL-GroES system forms a nano-cage that allows encapsulation of the non-native substrate proteins and provides a physical environment optimized to promote and accelerate protein folding. GroES binds to the apical surface of the GroEL ring, thereby capping the opening of the GroEL channel. The protein is Co-chaperonin GroES of Haemophilus influenzae (strain PittGG).